The sequence spans 904 residues: Alpha-actinin-4 (904 aa).

The disordered stretch occupies residues 1–27; that stretch reads MVDYHSAGQPYPYGGNGPGPNGDYMAQ. Residues 1 to 259 are actin-binding; that stretch reads MVDYHSAGQP…IMTYVSSFYH (259 aa). 2 Calponin-homology (CH) domains span residues 43–147 and 156–262; these read KQQR…LRFA and TSAK…HAFS. Spectrin repeat units lie at residues 286–396, 406–511, 521–632, and 642–745; these read HLME…WLLN, HLAE…ALEK, ELHL…ALQD, and RLRR…EVEN. EF-hand domains lie at 758–793 and 799–834; these read EQMQ…LGYD and QGDA…ETTD. Positions 771, 773, 782, 812, 814, 816, and 818 each coordinate Ca(2+).

This sequence belongs to the alpha-actinin family. In terms of assembly, homodimer; antiparallel. Component of the CART complex. May interact with nuclear receptors.

The protein resides in the nucleus. The protein localises to the cytoplasm. Its subcellular location is the cell junction. It is found in the perinuclear region. In terms of biological role, F-actin cross-linking protein which is thought to anchor actin to a variety of intracellular structures. This is a bundling protein. Probably involved in vesicular trafficking via its association with the CART complex. Involved in tight junction assembly in epithelial cells. May also function as a transcriptional coactivator, stimulating transcription mediated by nuclear hormone receptors. This is Alpha-actinin-4 from Gallus gallus (Chicken).